Here is a 259-residue protein sequence, read N- to C-terminus: Undecaprenyl-diphosphatase (259 aa).

7 helical membrane passes run 1–21 (MEIF…FLPI), 40–60 (QITL…IIFW), 75–95 (WLTI…ILFE), 101–121 (LFSS…LLYL), 179–199 (SFLL…KDAL), 206–226 (LTWL…YFAI), and 239–259 (TVFA…AGIF).

The protein belongs to the UppP family.

The protein resides in the cell inner membrane. The catalysed reaction is di-trans,octa-cis-undecaprenyl diphosphate + H2O = di-trans,octa-cis-undecaprenyl phosphate + phosphate + H(+). Catalyzes the dephosphorylation of undecaprenyl diphosphate (UPP). Confers resistance to bacitracin. This Halothermothrix orenii (strain H 168 / OCM 544 / DSM 9562) protein is Undecaprenyl-diphosphatase.